The chain runs to 222 residues: Octanoyltransferase (222 aa).

Positions 34 to 214 (GEKNSTVLIL…EFSKHDEALV (181 aa)) constitute a BPL/LPL catalytic domain. Substrate contacts are provided by residues 72–79 (RGGKLTWH), 144–146 (AIG), and 157–159 (GVA). The active-site Acyl-thioester intermediate is Cys175.

This sequence belongs to the LipB family.

It localises to the cytoplasm. It carries out the reaction octanoyl-[ACP] + L-lysyl-[protein] = N(6)-octanoyl-L-lysyl-[protein] + holo-[ACP] + H(+). The protein operates within protein modification; protein lipoylation via endogenous pathway; protein N(6)-(lipoyl)lysine from octanoyl-[acyl-carrier-protein]: step 1/2. Catalyzes the transfer of endogenously produced octanoic acid from octanoyl-acyl-carrier-protein onto the lipoyl domains of lipoate-dependent enzymes. Lipoyl-ACP can also act as a substrate although octanoyl-ACP is likely to be the physiological substrate. The chain is Octanoyltransferase from Paenarthrobacter aurescens (strain TC1).